The sequence spans 301 residues: Dimethylsulfoniopropionate lyase (301 aa).

Residues Cys111 and Cys230 each act as proton donor/acceptor in the active site.

It belongs to the aspartate/glutamate racemases family. ALMA1 subfamily. In terms of assembly, homotetramer.

It catalyses the reaction S,S-dimethyl-beta-propiothetin = acrylate + dimethyl sulfide + H(+). Mediates cleavage of dimethylsulfoniopropionate (DMSP) into dimethyl sulfide (DMS) and acrylate. DMS is the principal form by which sulfur is transported from oceans to the atmosphere and is a key component of the ocean sulfur cycle. The chain is Dimethylsulfoniopropionate lyase from Durusdinium sp. clade D (Symbiodinium sp. clade D).